The following is a 98-amino-acid chain: Trp operon repressor homolog (98 aa).

The DNA-binding element occupies 59–82 (QRQVSQMLGVGVATITRGSNELKA).

This sequence belongs to the TrpR family. As to quaternary structure, homodimer.

The protein resides in the cytoplasm. This protein is an aporepressor. When complexed with L-tryptophan it binds the operator region of the trp operon and prevents the initiation of transcription. The chain is Trp operon repressor homolog from Vibrio atlanticus (strain LGP32) (Vibrio splendidus (strain Mel32)).